A 360-amino-acid chain; its full sequence is MAKRIYNFNAGPAVLPLPVLEEMQREMLDFHGSGMSILEVSHRSKWFEDVLDEAIVRIKRLLKLDDTYQVLFLQGGASLQFCMVPMNLALPGKPVSYVETDMWSTKAIQEARIQGKEVEVAASSGDREFTYIPGQVKVRPDSAYLHITSNNTIRGTQWHSFPDTGNIPLVSDMSSDIFSRVFDPKPFGLIYAGAQKNAGPAGVTLVIVREDMLKRVPKELPTMLKYTTFSEKKSMFNTPPCFAIYTVSLVTKWLEETVGGIARMEEQNRRKGETLYRYLDSQDYYRGTAEPDSRSLMNVTFRLPDAALDKFVKEATAAGLGGLKGHRSVGGCRASLYNATPLEGVEALVDFMKEFVRKNG.

An L-glutamate-binding site is contributed by arginine 43. Residues 77 to 78 (AS), tryptophan 103, threonine 152, aspartate 172, and glutamine 195 each bind pyridoxal 5'-phosphate. At lysine 196 the chain carries N6-(pyridoxal phosphate)lysine. Residue 237–238 (NT) coordinates pyridoxal 5'-phosphate.

It belongs to the class-V pyridoxal-phosphate-dependent aminotransferase family. SerC subfamily. Homodimer. Pyridoxal 5'-phosphate is required as a cofactor.

The protein resides in the cytoplasm. It catalyses the reaction O-phospho-L-serine + 2-oxoglutarate = 3-phosphooxypyruvate + L-glutamate. It carries out the reaction 4-(phosphooxy)-L-threonine + 2-oxoglutarate = (R)-3-hydroxy-2-oxo-4-phosphooxybutanoate + L-glutamate. The protein operates within amino-acid biosynthesis; L-serine biosynthesis; L-serine from 3-phospho-D-glycerate: step 2/3. Its pathway is cofactor biosynthesis; pyridoxine 5'-phosphate biosynthesis; pyridoxine 5'-phosphate from D-erythrose 4-phosphate: step 3/5. Catalyzes the reversible conversion of 3-phosphohydroxypyruvate to phosphoserine and of 3-hydroxy-2-oxo-4-phosphonooxybutanoate to phosphohydroxythreonine. The polypeptide is Phosphoserine aminotransferase (Syntrophobacter fumaroxidans (strain DSM 10017 / MPOB)).